A 227-amino-acid chain; its full sequence is UPF0758 protein LPC_1989 (227 aa).

Positions 102–225 (QLSNTQQTYA…YSIFAENKWV (124 aa)) constitute an MPN domain. Zn(2+) contacts are provided by His173, His175, and Asp186. A JAMM motif motif is present at residues 173–186 (HNHPSGLSDASQQD).

It belongs to the UPF0758 family.

This chain is UPF0758 protein LPC_1989, found in Legionella pneumophila (strain Corby).